The primary structure comprises 159 residues: 2-amino-4-hydroxy-6-hydroxymethyldihydropteridine pyrophosphokinase (159 aa).

The protein belongs to the HPPK family. As to quaternary structure, monomer.

It catalyses the reaction 6-hydroxymethyl-7,8-dihydropterin + ATP = (7,8-dihydropterin-6-yl)methyl diphosphate + AMP + H(+). It functions in the pathway cofactor biosynthesis; tetrahydrofolate biosynthesis; 2-amino-4-hydroxy-6-hydroxymethyl-7,8-dihydropteridine diphosphate from 7,8-dihydroneopterin triphosphate: step 4/4. Catalyzes the transfer of pyrophosphate from adenosine triphosphate (ATP) to 6-hydroxymethyl-7,8-dihydropterin, an enzymatic step in folate biosynthesis pathway. The sequence is that of 2-amino-4-hydroxy-6-hydroxymethyldihydropteridine pyrophosphokinase (folK) from Escherichia coli (strain K12).